The chain runs to 284 residues: Tropomyosin (284 aa).

A disordered region spans residues 1–39 (MDAIKKKMQAMKLEKDNAMDRADTLEQQNKEANIRAEKT). A coiled-coil region spans residues 1 to 284 (MDAIKKKMQA…DQTFSELSGY (284 aa)). Residues 12–39 (KLEKDNAMDRADTLEQQNKEANIRAEKT) are compositionally biased toward basic and acidic residues.

This sequence belongs to the tropomyosin family. As to quaternary structure, homodimer.

Tropomyosin, in association with the troponin complex, plays a central role in the calcium dependent regulation of muscle contraction. The polypeptide is Tropomyosin (TM1) (Homarus americanus (American lobster)).